The chain runs to 484 residues: MKFIVKLYPEIMMKSKPVRMRFTKMLETNIRNVLKKVDEDAKVQRQWDRIWVKVPNDKPELAQAFGERLACIPGIAHVVQVDEYSFTSVDDIYQQVLPVYRDQIAGKTFCVRVKRTGSHDFNSIEVERYVGGGLNQFTDAVGVRLKNPEVTVNLEIEGDKLYMVTKRIEGLGGFPMATQEDVLSLISGGFDSGVSSYQFIKKGARTHYCFFNLGGAQHEIGVKQVAYHLWKTYGESHKVKFVSVPFEPVVAEILEKIDNGQMGVVLKRMMMRTAARIAERMGIQAIVTGESLGQVSSQTLTNLNVIDRCTDMLILRPLIAMDKQDIINECRRIGTEDFAKSMPEYCGVISQKPTVKAVLAKVEAEETKFSEDLIDRIVEQAVAIDIREIAEQMNTRITETETVVAIDTNEVVIDIRAPEEEENKPLEIEGVEIKRIPFFKLATQFADLDKQKTYLLYCERGVMSKLQALYLIEQGYHNVKVYRP.

One can recognise a THUMP domain in the interval 63–167 (QAFGERLACI…GDKLYMVTKR (105 aa)). Residues 185-186 (LI), Lys-267, Gly-289, and Gln-298 each bind ATP. Cys-346 and Cys-458 are disulfide-bonded. Residues 406–484 (IDTNEVVIDI…GYHNVKVYRP (79 aa)) form the Rhodanese domain. Residue Cys-458 is the Cysteine persulfide intermediate of the active site.

Belongs to the ThiI family.

It is found in the cytoplasm. It carries out the reaction [ThiI sulfur-carrier protein]-S-sulfanyl-L-cysteine + a uridine in tRNA + 2 reduced [2Fe-2S]-[ferredoxin] + ATP + H(+) = [ThiI sulfur-carrier protein]-L-cysteine + a 4-thiouridine in tRNA + 2 oxidized [2Fe-2S]-[ferredoxin] + AMP + diphosphate. It catalyses the reaction [ThiS sulfur-carrier protein]-C-terminal Gly-Gly-AMP + S-sulfanyl-L-cysteinyl-[cysteine desulfurase] + AH2 = [ThiS sulfur-carrier protein]-C-terminal-Gly-aminoethanethioate + L-cysteinyl-[cysteine desulfurase] + A + AMP + 2 H(+). It participates in cofactor biosynthesis; thiamine diphosphate biosynthesis. Its function is as follows. Catalyzes the ATP-dependent transfer of a sulfur to tRNA to produce 4-thiouridine in position 8 of tRNAs, which functions as a near-UV photosensor. Also catalyzes the transfer of sulfur to the sulfur carrier protein ThiS, forming ThiS-thiocarboxylate. This is a step in the synthesis of thiazole, in the thiamine biosynthesis pathway. The sulfur is donated as persulfide by IscS. The sequence is that of tRNA sulfurtransferase from Shewanella sp. (strain MR-7).